A 92-amino-acid polypeptide reads, in one-letter code: Bombyxin A-1 (92 aa).

A signal peptide spans 1–19 (MKILLAIALMLSTVMWVST). A Pyrrolidone carboxylic acid modification is found at Gln-20. Disulfide bonds link Cys-29/Cys-79, Cys-41/Cys-92, and Cys-78/Cys-83. A propeptide spans 50–70 (SGAQFASYGSAWLMPYSEGRG) (c peptide like).

The protein belongs to the insulin family. In terms of assembly, heterodimer of a B chain and an A chain linked by two disulfide bonds.

The protein localises to the secreted. Brain peptide responsible for activation of prothoracic glands to produce ecdysone in insects. The polypeptide is Bombyxin A-1 (BBXA1) (Bombyx mori (Silk moth)).